Reading from the N-terminus, the 524-residue chain is Inosine-5'-monophosphate dehydrogenase (524 aa).

2 CBS domains span residues 121 to 180 and 184 to 242; these read FILD…NTPV and MTPR…PLAS. NAD(+) is bound by residues 280 to 282 and 330 to 332; these read DSS and GMG. K(+)-binding residues include Gly-332 and Gly-334. Ser-335 contributes to the IMP binding site. K(+) is bound at residue Cys-337. The active-site Thioimidate intermediate is Cys-337. IMP is bound by residues 370-372, 393-394, and 417-421; these read DGG, GG, and YRGMG. Catalysis depends on Arg-439, which acts as the Proton acceptor. Gln-451 contacts IMP. Residues Glu-510 and Gly-511 each contribute to the K(+) site.

This sequence belongs to the IMPDH/GMPR family. In terms of assembly, homotetramer. Requires K(+) as cofactor.

The protein resides in the cytoplasm. It carries out the reaction IMP + NAD(+) + H2O = XMP + NADH + H(+). It functions in the pathway purine metabolism; XMP biosynthesis via de novo pathway; XMP from IMP: step 1/1. Its activity is regulated as follows. Mycophenolic acid (MPA) is a non-competitive inhibitor that prevents formation of the closed enzyme conformation by binding to the same site as the amobile flap. In contrast, mizoribine monophosphate (MZP) is a competitive inhibitor that induces the closed conformation. MPA is a potent inhibitor of mammalian IMPDHs but a poor inhibitor of the bacterial enzymes. MZP is a more potent inhibitor of bacterial IMPDH. Catalyzes the conversion of inosine 5'-phosphate (IMP) to xanthosine 5'-phosphate (XMP), the first committed and rate-limiting step in the de novo synthesis of guanine nucleotides, and therefore plays an important role in the regulation of cell growth. This Schizosaccharomyces pombe (strain 972 / ATCC 24843) (Fission yeast) protein is Inosine-5'-monophosphate dehydrogenase (gua1).